A 1253-amino-acid chain; its full sequence is Pleckstrin homology-like domain family B member 2 (1253 aa).

A compositionally biased stretch (basic and acidic residues) spans 1–12 (MEEHSYIQKELD). 3 disordered regions span residues 1-43 (MEEH…PKKY), 60-159 (LTLS…KSHD), and 187-212 (DAGP…RKMS). Polar residues predominate over residues 29 to 43 (NDSQNMMESLSPKKY). Ser71 and Ser73 each carry phosphoserine. Positions 74–96 (PLGTSVRSSPSLAKIQGSKQFSY) are enriched in polar residues. The span at 126–144 (ADFDHYTGRDSERALRLSE) shows a compositional bias: basic and acidic residues. Residues Ser157, Ser204, Ser212, Ser242, and Ser245 each carry the phosphoserine modification. The tract at residues 265–286 (NQLTPLSLPPRNSLGNSKRTKL) is disordered. Phosphoserine is present on residues Ser330, Ser334, Ser348, Ser351, Ser384, Ser387, Ser415, Ser420, Ser468, Ser489, and Ser501. Residue Thr504 is modified to Phosphothreonine. Ser513 bears the Phosphoserine mark. The segment at 525-567 (LSQSSASFFTPRSTRNDELLSDLTRTPPPPSSTFPKASSESSY) is disordered. Phosphothreonine occurs at positions 550 and 574. Coiled-coil stretches lie at residues 584-696 (SQEL…LDNC) and 722-807 (FEDL…LCNL). Thr898 is modified (phosphothreonine). The stretch at 1032–1098 (IARIEEMERL…QKLIEKEVKI (67 aa)) forms a coiled coil. Residues 1143 to 1246 (EKTCRGFLIK…WMDVIVTGAE (104 aa)) enclose the PH domain.

As to quaternary structure, interacts with FLNC. Interacts with AMOTL2; interaction may facilitate PHLDB2 localization to the myotube podosome cortex that surrounds the core. Part of a cortical microtubule stabilization complex (CMSC) composed of KANK1, PPFIA1, PPFIBP1, ERC1/ELKS, PHLDB2/LL5beta, CLASPs, KIF21A and possibly additional interactors; within CMSCs KANK1 and PHLDB2/LL5beta appear to be the core components for targeting of microtubule-binding proteins KIF21A and CLASPs, whereas PPFIA1, PPFIBP1 and ERC1/ELKS serve as scaffolds for protein clustering.

It localises to the cytoplasm. It is found in the cell cortex. The protein resides in the membrane. Its subcellular location is the cell projection. The protein localises to the podosome. Seems to be involved in the assembly of the postsynaptic apparatus. May play a role in acetyl-choline receptor (AChR) aggregation in the postsynaptic membrane. This is Pleckstrin homology-like domain family B member 2 (PHLDB2) from Homo sapiens (Human).